We begin with the raw amino-acid sequence, 459 residues long: tRNA modification GTPase MnmE (459 aa).

Arg22, Glu85, and Arg124 together coordinate (6S)-5-formyl-5,6,7,8-tetrahydrofolate. The region spanning 221–380 (GLSTVIVGKP…LEIQIRDLFF (160 aa)) is the TrmE-type G domain. K(+) is bound at residue Asn231. Residues 231 to 236 (NVGKSS), 250 to 256 (TEVAGTT), and 275 to 278 (DTAG) each bind GTP. Ser235 lines the Mg(2+) pocket. 3 residues coordinate K(+): Thr250, Val252, and Thr255. Thr256 is a Mg(2+) binding site. Lys459 is a binding site for (6S)-5-formyl-5,6,7,8-tetrahydrofolate.

Belongs to the TRAFAC class TrmE-Era-EngA-EngB-Septin-like GTPase superfamily. TrmE GTPase family. In terms of assembly, homodimer. Heterotetramer of two MnmE and two MnmG subunits. Requires K(+) as cofactor.

Its subcellular location is the cytoplasm. Functionally, exhibits a very high intrinsic GTPase hydrolysis rate. Involved in the addition of a carboxymethylaminomethyl (cmnm) group at the wobble position (U34) of certain tRNAs, forming tRNA-cmnm(5)s(2)U34. The chain is tRNA modification GTPase MnmE from Staphylococcus aureus (strain bovine RF122 / ET3-1).